A 496-amino-acid polypeptide reads, in one-letter code: Cytochrome P450 4ae1 (496 aa).

A heme-binding site is contributed by Cys443.

Belongs to the cytochrome P450 family. Heme serves as cofactor.

The protein localises to the endoplasmic reticulum membrane. It is found in the microsome membrane. May be involved in the metabolism of insect hormones and in the breakdown of synthetic insecticides. This is Cytochrome P450 4ae1 (Cyp4ae1) from Drosophila melanogaster (Fruit fly).